Consider the following 451-residue polypeptide: ADP-specific phosphofructokinase (451 aa).

Residues 1–450 (MSVPQDVSIF…FITYVNYLKR (450 aa)) form the ADPK domain. Mg(2+) is bound by residues glutamate 261, glutamate 291, and aspartate 434. Aspartate 434 serves as the catalytic Proton acceptor.

This sequence belongs to the carbohydrate kinase PfkC family. The cofactor is Mg(2+).

It localises to the cytoplasm. It carries out the reaction beta-D-fructose 6-phosphate + ADP = beta-D-fructose 1,6-bisphosphate + AMP + H(+). It participates in carbohydrate degradation; glycolysis. Its function is as follows. Catalyzes the phosphorylation of fructose 6-phosphate to fructose 1,6-bisphosphate using ADP as the phosphate donor. This chain is ADP-specific phosphofructokinase, found in Pyrococcus abyssi (strain GE5 / Orsay).